Reading from the N-terminus, the 162-residue chain is Protein A49 (162 aa).

This sequence belongs to the poxviridae A49 protein family.

The chain is Protein A49 from Homo sapiens (Human).